A 558-amino-acid chain; its full sequence is MRVCGIKLTHDGAIAVVEDGRLVFCTEQEKRNNNSRYQEINNLDAVVAALAENGVNARDVDQFVIDGWDGEAESQFKVLSGETPVILRGAPYVERHAEGLLDWIGGSGLTLGDRVFSYRSYPHVTSHVASAYCTSPFAKSGDPALCLVWDGCIFPRLYHVEGKRASFVKSLFPVTGQAYAAAGHYFGPYKQTSRGGWDLGVAGKLMAFIALGSVHERIVAVFQKLYQEHFAGDTALACAFRANINNSESSLAAVHDFFAASALQLGAEAPEDVLASSHFFLERLLVDEMANALQHHPLPGARNLCIAGGCGLNIKWNSALRETGLFDSVWVPPFPNDSGSAIGAACCEIVAQQGFVPLDWSVYSGPSLQAGKVPAGWHASPCSISEVAAILASNKPVVFLSGRSELGPRALGGRSILAAATSPEMKDHLNEIKFREHFRPVAPICLEDRAPDIFSPGTPDPYMLFDHQTKMPWQDKVPAVVHLDGSARLQTISRNSQHKVAEVLVEYEKLTGIPLLCNTSANYHGRGFFPSAAAACEWGRVEHVWCDGMLYRKPSATA.

It belongs to the NodU/CmcH family.

Involved in 6-O-carbamoylation of Nod-factors. The polypeptide is Nodulation protein U (nodU) (Sinorhizobium fredii (strain NBRC 101917 / NGR234)).